A 170-amino-acid polypeptide reads, in one-letter code: Myosin regulatory light chain 11 (170 aa).

Ala2 carries the post-translational modification N,N,N-trimethylalanine. A phosphoserine mark is found at Ser16 and Ser17. Residues Thr26 and Thr36 each carry the phosphothreonine modification. An EF-hand 1 domain is found at 26 to 61 (TQIQEFKEAFTVIDQNRDGIIDKEDLRDTFAAMGRL). Positions 39, 41, 43, and 50 each coordinate Ca(2+). Ser76 bears the Phosphoserine mark. 2 consecutive EF-hand domains span residues 96 to 131 (DPEDVITGAFKVLDPEGKGTIKKQFLEELLTTQCDR) and 132 to 167 (FSQEEIKNMWAAFPPDVGGNVDYKNICYVITHGDAK). Residue Thr102 is modified to Phosphothreonine.

As to quaternary structure, myosin is a hexamer of 2 heavy chains and 4 light chains. Post-translationally, n,N,N-trimethylalanine found in this myosin light chain would not have been detected in the N-terminal tryptic peptide in PubMed:863872 and PubMed:352892 because it would remain trimethylated and ninhydrin negative after hydrolysis.

Functionally, myosin regulatory subunit that plays an essential role to maintain muscle integrity during early development. Plays a role in muscle contraction. In Oryctolagus cuniculus (Rabbit), this protein is Myosin regulatory light chain 11 (MYL11).